The sequence spans 884 residues: Probable leucine--tRNA ligase, cytoplasmic (884 aa).

The short motif at 40 to 50 (PYMNGKLHLGH) is the 'HIGH' region element. Positions 566–570 (KMSKS) match the 'KMSKS' region motif. K569 lines the ATP pocket.

Belongs to the class-I aminoacyl-tRNA synthetase family.

Its subcellular location is the cytoplasm. The catalysed reaction is tRNA(Leu) + L-leucine + ATP = L-leucyl-tRNA(Leu) + AMP + diphosphate. The polypeptide is Probable leucine--tRNA ligase, cytoplasmic (Vairimorpha ceranae (strain BRL01) (Microsporidian parasite)).